Here is a 932-residue protein sequence, read N- to C-terminus: Glycine dehydrogenase (decarboxylating) (932 aa).

Lys685 carries the N6-(pyridoxal phosphate)lysine modification.

It belongs to the GcvP family. In terms of assembly, the glycine cleavage system is composed of four proteins: P, T, L and H. Requires pyridoxal 5'-phosphate as cofactor.

It catalyses the reaction N(6)-[(R)-lipoyl]-L-lysyl-[glycine-cleavage complex H protein] + glycine + H(+) = N(6)-[(R)-S(8)-aminomethyldihydrolipoyl]-L-lysyl-[glycine-cleavage complex H protein] + CO2. Functionally, the glycine cleavage system catalyzes the degradation of glycine. The P protein binds the alpha-amino group of glycine through its pyridoxal phosphate cofactor; CO(2) is released and the remaining methylamine moiety is then transferred to the lipoamide cofactor of the H protein. In Brucella canis (strain ATCC 23365 / NCTC 10854 / RM-666), this protein is Glycine dehydrogenase (decarboxylating).